The primary structure comprises 328 residues: Carbonic anhydrase-related protein 11 (328 aa).

Positions 1–23 are cleaved as a signal peptide; it reads MGGAARLSAPQALVLWAALGAAA. The Alpha-carbonic anhydrase domain maps to 33–303; sequence DWWSYKENLQ…LAHRALRGNR (271 aa). N118 is a glycosylation site (N-linked (GlcNAc...) asparagine). Residues 300 to 328 form a disordered region; it reads RGNRDPRHPERRCRGPNYRLHVDGGPHGR. The segment covering 319 to 328 has biased composition (basic and acidic residues); sequence LHVDGGPHGR.

This sequence belongs to the alpha-carbonic anhydrase family.

It localises to the secreted. Functionally, does not have a catalytic activity. The polypeptide is Carbonic anhydrase-related protein 11 (Ca11) (Mus musculus (Mouse)).